We begin with the raw amino-acid sequence, 394 residues long: Suppressor APC domain-containing protein 2 (394 aa).

Disordered stretches follow at residues 1–23 (MAGA…STEG), 95–125 (LLSA…RLVF), and 150–188 (GPSA…SSSA). Residues 177–188 (SQSAALEPSSSA) show a composition bias toward polar residues. Residue Thr-219 is modified to Phosphothreonine. The stretch at 227–277 (GLLKQMKELEQEKEVLLQGLEMMARGRDWYQQQLQRVQERQRRLGQSRASA) forms a coiled coil. Residue Ser-284 is modified to Phosphoserine. Positions 336 to 384 (QQQTILMLKEQNRLLTQEVTEKSERITQLEQEKSALIKQLFEARALSQQ) form a coiled coil.

Interacts with a spindle orientation complex at least composed of GNAI1, GPSM2 and NUMA1. Interacts with GPSM2 (via TPR motifs); this interaction is required to prevent GPSM2 anchoring at the mitotic apical cortex and is inhibited in presence of NUMA1 in a dose dependent manner. Interacts with PARD3. In terms of tissue distribution, expressed in 5-month-old fetal tissues, including stomach, intestine, colon, liver, brain, lung, heart, spleen and kidney. Undetectable in non-cancerous adult tissues. Expressed in many primary gastric carcinoma, but almost not in adjacent normal mucosa. Expressed preferentially in M and G1 phases, compared to S and G2 phases. Expression is up-regulated in hepatocellular carcinoma (HCC) and colorectal cancer (CRC) tissues (at protein level).

It localises to the cytoplasm. The protein localises to the nucleus. It is found in the cell cortex. Its subcellular location is the apical cell membrane. The protein resides in the cell junction. It localises to the tight junction. Functionally, plays a role in planar mitotic spindle orientation in retinal progenitor cells (RPCs) and promotes the production of symmetric terminal divisions. Negatively regulates the mitotic apical cortex localization of GPSM2. Involved also in positive regulation of cell proliferation and tumor cell growth. This is Suppressor APC domain-containing protein 2 from Homo sapiens (Human).